The primary structure comprises 168 residues: MKTHIAWASACLLLVMLTGFFTIGQQTYKIEKLKDKNEVLSEKIKELNHIESTSSASENKAFFEAFFNYSDIDIRYETVKKHTTGKGFDYAFPSRSDQKHTVSVQSELLSLESYSKPLDESHELFLNIVEVATTANSVTTNQVLIVQTTMKKEKDGWLVDNVQVKGNG.

The helical transmembrane segment at 5-24 threads the bilayer; that stretch reads IAWASACLLLVMLTGFFTIG.

It is found in the membrane. This is an uncharacterized protein from Bacillus subtilis (strain 168).